The primary structure comprises 190 residues: Bifunctional protein PyrR (190 aa).

The PRPP-binding signature appears at valine 112–serine 124.

The protein belongs to the purine/pyrimidine phosphoribosyltransferase family. PyrR subfamily.

It carries out the reaction UMP + diphosphate = 5-phospho-alpha-D-ribose 1-diphosphate + uracil. Its function is as follows. Regulates the transcription of the pyrimidine nucleotide (pyr) operon in response to exogenous pyrimidines. Also displays a weak uracil phosphoribosyltransferase activity which is not physiologically significant. This Mycolicibacterium paratuberculosis (strain ATCC BAA-968 / K-10) (Mycobacterium paratuberculosis) protein is Bifunctional protein PyrR.